The chain runs to 453 residues: uncharacterized protein (453 aa).

2 disordered regions span residues 140–161 (YGES…TRPQ) and 311–332 (TTTR…SASS).

This is an uncharacterized protein from Caenorhabditis elegans.